The sequence spans 515 residues: Leucine-rich repeat transmembrane neuronal protein 2 (515 aa).

Positions 1–33 (MGLHFKWPLGAPMLAAIYAMSVVLKMLPALGMA) are cleaved as a signal peptide. The LRRNT domain maps to 34–61 (CPPKCRCEKLLFYCDSQGFHSVPNATDK). The Extracellular portion of the chain corresponds to 34–421 (CPPKCRCEKL…EPDNAIFTQR (388 aa)). The N-linked (GlcNAc...) asparagine glycan is linked to N57. LRR repeat units follow at residues 63–83 (SLGLSLRHNHITALERDQFAS), 86–107 (QLTWLHLDHNQISTVKEDAFQG), 110–131 (KLKELILSSNKIFYLPNTTFTQ), 134–155 (NLQNLDLSFNQLSSLHPELFYG), 158–179 (KLQTLHLRSNSLRTIPVRLFWD), 182–203 (SLEFLDLSTNRLRSLARNGFAG), 206–227 (KLRELHLEHNQLTKINFAHFLR), 230–251 (SLHTLFLQWNKISNLTCGMDWT), 254–275 (TLEKLDLTGNEIKAIDLTVFET), and 278–299 (NLKILLMDNNKLNSLDSKILNS). The N-linked (GlcNAc...) asparagine glycan is linked to N126. N243 carries N-linked (GlcNAc...) asparagine glycosylation. One can recognise an LRRCT domain in the interval 311-362 (NLWECSPRVCALASWLGSFQGRWEHSILCHSPDHTQGEDILDAVHGFQLCWN). N362 is a glycosylation site (N-linked (GlcNAc...) asparagine). A helical membrane pass occupies residues 422–442 (VITGTMALLFSFFFIIFIVFI). The Cytoplasmic segment spans residues 443 to 515 (SRKCCPPTLR…QQLPYKECEV (73 aa)). Residues 512–515 (ECEV) carry the Involved in DLG4-binding motif.

It belongs to the LRRTM family. Interacts with DLG4. Interacts with neurexin NRXN1; interaction is mediated by heparan sulfate glycan modification on neurexin. As to expression, expressed in neuronal tissues.

It localises to the cell membrane. It is found in the postsynaptic cell membrane. Functionally, involved in the development and maintenance of excitatory synapses in the vertebrate nervous system. Regulates surface expression of AMPA receptors and instructs the development of functional glutamate release sites. Acts as a ligand for the presynaptic receptors NRXN1-A and NRXN1-B. This is Leucine-rich repeat transmembrane neuronal protein 2 (Lrrtm2) from Mus musculus (Mouse).